A 349-amino-acid chain; its full sequence is Probable dual-specificity RNA methyltransferase RlmN (349 aa).

E94 acts as the Proton acceptor in catalysis. One can recognise a Radical SAM core domain in the interval 100 to 324; sequence YKTHTSICLS…NKNNVNTTIR (225 aa). A disulfide bridge links C107 with C335. Residues C114, C118, and C121 each contribute to the [4Fe-4S] cluster site. Residues 161-162, S193, 216-218, and N292 each bind S-adenosyl-L-methionine; these read GE and SLH. C335 (S-methylcysteine intermediate) is an active-site residue.

It belongs to the radical SAM superfamily. RlmN family. Requires [4Fe-4S] cluster as cofactor.

It localises to the cytoplasm. It catalyses the reaction adenosine(2503) in 23S rRNA + 2 reduced [2Fe-2S]-[ferredoxin] + 2 S-adenosyl-L-methionine = 2-methyladenosine(2503) in 23S rRNA + 5'-deoxyadenosine + L-methionine + 2 oxidized [2Fe-2S]-[ferredoxin] + S-adenosyl-L-homocysteine. The enzyme catalyses adenosine(37) in tRNA + 2 reduced [2Fe-2S]-[ferredoxin] + 2 S-adenosyl-L-methionine = 2-methyladenosine(37) in tRNA + 5'-deoxyadenosine + L-methionine + 2 oxidized [2Fe-2S]-[ferredoxin] + S-adenosyl-L-homocysteine. Functionally, specifically methylates position 2 of adenine 2503 in 23S rRNA and position 2 of adenine 37 in tRNAs. The polypeptide is Probable dual-specificity RNA methyltransferase RlmN (Finegoldia magna (strain ATCC 29328 / DSM 20472 / WAL 2508) (Peptostreptococcus magnus)).